A 399-amino-acid polypeptide reads, in one-letter code: Putative cytochrome P450 133B2 (399 aa).

Heme is bound at residue Cys348.

It belongs to the cytochrome P450 family. Requires heme as cofactor.

The chain is Putative cytochrome P450 133B2 (cyp133B2) from Xylella fastidiosa (strain Temecula1 / ATCC 700964).